Here is a 450-residue protein sequence, read N- to C-terminus: Glutamate--tRNA ligase 1 (450 aa).

Residues 7 to 17 carry the 'HIGH' region motif; that stretch reads PSPTGYMHVGN. A 'KMSKS' region motif is present at residues 236 to 240; the sequence is KISKR. Lys-239 lines the ATP pocket.

It belongs to the class-I aminoacyl-tRNA synthetase family. Glutamate--tRNA ligase type 1 subfamily. Monomer.

The protein resides in the cytoplasm. It catalyses the reaction tRNA(Glu) + L-glutamate + ATP = L-glutamyl-tRNA(Glu) + AMP + diphosphate. Functionally, catalyzes the attachment of glutamate to tRNA(Glu) in a two-step reaction: glutamate is first activated by ATP to form Glu-AMP and then transferred to the acceptor end of tRNA(Glu). In Anaplasma phagocytophilum (strain HZ), this protein is Glutamate--tRNA ligase 1.